The chain runs to 346 residues: Peripherin-2 (346 aa).

At 1–24 (MALMKTKFNLKRRVKLAQGLWLMN) the chain is on the cytoplasmic side. A helical membrane pass occupies residues 25–43 (WCCVLAGIALFSMGVFLKI). Over 44–61 (ELRKRSEVMDNDESHFVP) the chain is Lumenal. The chain crosses the membrane as a helical span at residues 62–80 (NSLILMGSLACALNAFPGK). Over 81–99 (ICYDSLDPTKFPRWKPMLK) the chain is Cytoplasmic. A helical membrane pass occupies residues 100–123 (PYLIICLIFNIFIFFTGVVCFLTR). Over 124–264 (GSLESTLAHG…LNYYTSMMSS (141 aa)) the chain is Lumenal. A glycan (N-linked (GlcNAc...) asparagine) is linked at Asn-229. The helical transmembrane segment at 265–290 (MGGMVFLVWIMEMAVMIGLRFLHTCL) threads the bilayer. Topologically, residues 291-346 (ETIANPEDPECESEGWILEKSLKDTIKSSWELVKSMGKLNKVETAGGEEAGVATVS) are cytoplasmic.

Belongs to the PRPH2/ROM1 family. Homodimer; disulfide-linked. Found in both rod and cone photoreceptors. Specifically in the rims and incisures of rod and cone outer segment disks.

The protein resides in the membrane. In terms of biological role, may be involved in the morphogenesis of retina outer segment disks and the development and maintenance of the retina ultrastructure. This chain is Peripherin-2 (prph2), found in Xenopus laevis (African clawed frog).